The primary structure comprises 705 residues: Choline transporter-like protein 2 (705 aa).

The Cytoplasmic segment spans residues 1–33 (MGKDSQHYYGKHGTPQKYDPTFKGPIYNRGCTD). Threonine 14 is subject to Phosphothreonine. The helical transmembrane segment at 34-54 (IICCVLLFLAIVGYVAVGIIA) threads the bilayer. Residues 55-232 (WTHGDPRKVI…QIFEDYTVSW (178 aa)) lie on the Extracellular side of the membrane. 2 N-linked (GlcNAc...) asparagine glycosylation sites follow: asparagine 187 and asparagine 200. A helical transmembrane segment spans residues 233 to 253 (YWIVIGLVIAMLLSLMFIVLL). Topologically, residues 254–256 (RFL) are cytoplasmic. A helical membrane pass occupies residues 257–277 (AGVMVWVMIVMVILVLGYGIF). Over 278–315 (HCYAEYSRLRGEAGSDVSLVDLGFQTDLRVYLHLRQTW) the chain is Extracellular. A helical transmembrane segment spans residues 316–336 (MAFMIILSILEVVIILLLIFL). The Cytoplasmic portion of the chain corresponds to 337-364 (RKRILIAIALIKEASRAVGHVMCSMLYP). The chain crosses the membrane as a helical span at residues 365 to 385 (LVTFFLLCLCIAYWASTSVFL). Residues 386-453 (STSNVAVYKI…LQIFNAFMFF (68 aa)) are Extracellular-facing. The N-linked (GlcNAc...) asparagine glycan is linked to asparagine 416. A helical transmembrane segment spans residues 454-476 (WLANFVLALGQVTLAGAFASYYW). Topologically, residues 477–503 (AMRKPDDMPAFPLFSAFGRALRYHTGS) are cytoplasmic. Residues 504–524 (LAFGSLILAIVQIIRVMLEYL) form a helical membrane-spanning segment. At 525-562 (DQRLKAAQNKFAKFLMVCLKCCFWCLEKFIKFLNRNAY) the chain is on the extracellular side. A helical membrane pass occupies residues 563-583 (IMIAIYGTNFCTSARNAFFLL). Over 584 to 598 (MRNIIRVAVLDKVTD) the chain is Cytoplasmic. The helical transmembrane segment at 599–619 (FLFLLGKLLIVGSVGILAFFF) threads the bilayer. Residues 620 to 637 (FTHRIRIVQDTAPPLNYY) are Extracellular-facing. The helical transmembrane segment at 638-658 (WVPILTVIIGSYLIAHGFFSV) threads the bilayer. The Cytoplasmic segment spans residues 659-705 (YGMCVDTLFLCFLEDLERNDGSAERPYFMSSTLKKLLNKTNKKVAES).

It belongs to the CTL (choline transporter-like) family. In terms of assembly, interacts with COCH. In terms of processing, N-glycosylated.

The protein resides in the cell membrane. Its subcellular location is the mitochondrion outer membrane. It carries out the reaction choline(out) + n H(+)(in) = choline(in) + n H(+)(out). The enzyme catalyses ethanolamine(out) + n H(+)(in) = ethanolamine(in) + n H(+)(out). Its function is as follows. Exhibits choline transporter activity, as choline/H+ antiporter. Also acts as a low-affinity ethanolamine/H+ antiporter, regulating the supply of extracellular ethanolamine (Etn) for the CDP-Etn pathway, redistribute intracellular Etn and balance the CDP-Cho and CDP-Etn arms of the Kennedy pathway. This Rattus norvegicus (Rat) protein is Choline transporter-like protein 2 (Slc44a2).